The sequence spans 169 residues: UPF0065 protein in clcB-clcD intergenic region (169 aa).

The protein belongs to the UPF0065 (bug) family.

It localises to the periplasm. This chain is UPF0065 protein in clcB-clcD intergenic region, found in Pseudomonas knackmussii (strain DSM 6978 / CCUG 54928 / LMG 23759 / B13).